Reading from the N-terminus, the 337-residue chain is Phosphate acyltransferase (337 aa).

The protein belongs to the PlsX family. As to quaternary structure, homodimer. Probably interacts with PlsY.

It is found in the cytoplasm. It catalyses the reaction a fatty acyl-[ACP] + phosphate = an acyl phosphate + holo-[ACP]. It functions in the pathway lipid metabolism; phospholipid metabolism. In terms of biological role, catalyzes the reversible formation of acyl-phosphate (acyl-PO(4)) from acyl-[acyl-carrier-protein] (acyl-ACP). This enzyme utilizes acyl-ACP as fatty acyl donor, but not acyl-CoA. This is Phosphate acyltransferase from Listeria welshimeri serovar 6b (strain ATCC 35897 / DSM 20650 / CCUG 15529 / CIP 8149 / NCTC 11857 / SLCC 5334 / V8).